An 86-amino-acid chain; its full sequence is Small ribosomal subunit protein eS27y (86 aa).

A C4-type zinc finger spans residues 39–61 (CQGCFNITTVFSHSQTVVVCGNC).

The protein belongs to the eukaryotic ribosomal protein eS27 family. It depends on Zn(2+) as a cofactor.

In terms of biological role, may be involved in the elimination of damaged mRNA after UV irradiation. The polypeptide is Small ribosomal subunit protein eS27y (RPS27B) (Arabidopsis thaliana (Mouse-ear cress)).